Consider the following 776-residue polypeptide: Rho guanine nucleotide exchange factor 6 (776 aa).

Residues 1 to 111 enclose the Calponin-homology (CH) domain; the sequence is MNPEEQIVTW…TLLAVNKATE (111 aa). Positions 115–151 are disordered; that stretch reads SERPCGRSSSLSAANTSQTNPQGAVSSTVSGLQRQSK. Residues 121–151 are compositionally biased toward polar residues; the sequence is RSSSLSAANTSQTNPQGAVSSTVSGLQRQSK. A Phosphoserine modification is found at serine 126. The residue at position 133 (threonine 133) is a Phosphothreonine. Phosphoserine occurs at positions 144 and 150. The SH3 domain maps to 160 to 219; sequence SHQLIVKARFNFKQTNEDELSVCKGDIIYVTRVEEGGWWEGTLNGRTGWFPSNYVREIKS. Residue serine 225 is modified to Phosphoserine. The DH domain occupies 241-421; the sequence is YYTVVLQNIL…KTLMGQCQDL (181 aa). The PH domain occupies 443–548; the sequence is DIKNLGNVIF…WLEQLNRLIR (106 aa). Residue serine 488 is modified to Phosphoserine. Over residues 561 to 572 the composition is skewed to low complexity; it reads SSSCSAHSSFSS. The disordered stretch occupies residues 561-581; it reads SSSCSAHSSFSSTGQPRGPLE. Phosphoserine occurs at positions 640 and 684.

In terms of assembly, interacts with PAK kinases through the SH3 domain. Interacts with GIT1. Component of cytoplasmic complexes, which also contain PXN, GIT1 and PAK1. Interacts with PARVB. Interacts with BIN2. Identified in a complex with BIN2 and GIT2. Interacts with PARVG; the guanine nucleotide exchange factor activity of ARHGEF6 is essential for PARVG-induced enhancement of cell spreading. In terms of tissue distribution, ubiquitous.

The protein resides in the cell projection. It is found in the lamellipodium. Functionally, acts as a RAC1 guanine nucleotide exchange factor (GEF). This is Rho guanine nucleotide exchange factor 6 (ARHGEF6) from Homo sapiens (Human).